The following is an 87-amino-acid chain: MDAAEKKKIIEEYATHPGDTGSPDVQVAILTKRIAELTEHLKVHKGDHHSRRGLMLMVGQRRRLLNYIAKNDIEHYRELIARLGLRR.

The protein belongs to the universal ribosomal protein uS15 family. As to quaternary structure, part of the 30S ribosomal subunit. Forms a bridge to the 50S subunit in the 70S ribosome, contacting the 23S rRNA.

Functionally, one of the primary rRNA binding proteins, it binds directly to 16S rRNA where it helps nucleate assembly of the platform of the 30S subunit by binding and bridging several RNA helices of the 16S rRNA. Its function is as follows. Forms an intersubunit bridge (bridge B4) with the 23S rRNA of the 50S subunit in the ribosome. The protein is Small ribosomal subunit protein uS15 of Cutibacterium acnes (strain DSM 16379 / KPA171202) (Propionibacterium acnes).